The following is a 1244-amino-acid chain: Protein STU1 (1244 aa).

2 HEAT repeats span residues 87 to 124 (LQGRATYQLLLERLGDHKERIRSQAAQAFTDFWPAASA) and 159 to 196 (LLFRIYVPALVTCLEDADGVVRDTAKSTVIELFQSAPP). A compositionally biased stretch (low complexity) spans 232-243 (ETSSSFQSQSRS). Disordered regions lie at residues 232–326 (ETSS…GEGV), 561–758 (LLER…EPDV), and 795–998 (AFQG…DPVK). 4 stretches are compositionally biased toward polar residues: residues 261-271 (RSQSVLSMRSH), 287-312 (KSQSKPTRSGHSSKDPTLSHTASSES), 574-591 (ASQSFDGSRGSQPHSTKS), and 607-622 (ASSNVPSRPESAQSSF). Composition is skewed to low complexity over residues 652–663 (SASLSSAPMRPA), 690–703 (AQSKASSPSDSPQK), and 837–850 (PPSRIPISPSYSSR). Basic and acidic residues-rich tracts occupy residues 863-872 (LDSRRSRGES) and 979-998 (KVEGSERRRSLSPRSKDPVK). HEAT repeat units lie at residues 1038–1075 (TKYEDILMALLEALEKPDGDKGAPSGRSLDLKTQVLVT) and 1126–1163 (CNPPQVIDAILDLLETEERSFESYRMVAMGSYILSGLL).

It belongs to the CLASP family. Interacts with microtubules.

It localises to the cytoplasm. It is found in the cytoskeleton. The protein resides in the nucleus. The protein localises to the spindle. In terms of biological role, microtubule binding protein that promotes the stabilization of dynamic microtubules. Required for mitotic spindle formation. This is Protein STU1 (STU1) from Coccidioides immitis (strain RS) (Valley fever fungus).